We begin with the raw amino-acid sequence, 614 residues long: Dihydroxy-acid dehydratase (614 aa).

Mg(2+) is bound at residue Asp-81. Cys-122 serves as a coordination point for [2Fe-2S] cluster. Residues Asp-123 and Lys-124 each coordinate Mg(2+). At Lys-124 the chain carries N6-carboxylysine. Cys-193 serves as a coordination point for [2Fe-2S] cluster. Residue Glu-489 coordinates Mg(2+). Ser-515 serves as the catalytic Proton acceptor.

It belongs to the IlvD/Edd family. As to quaternary structure, homodimer. It depends on [2Fe-2S] cluster as a cofactor. Requires Mg(2+) as cofactor.

The enzyme catalyses (2R)-2,3-dihydroxy-3-methylbutanoate = 3-methyl-2-oxobutanoate + H2O. The catalysed reaction is (2R,3R)-2,3-dihydroxy-3-methylpentanoate = (S)-3-methyl-2-oxopentanoate + H2O. Its pathway is amino-acid biosynthesis; L-isoleucine biosynthesis; L-isoleucine from 2-oxobutanoate: step 3/4. The protein operates within amino-acid biosynthesis; L-valine biosynthesis; L-valine from pyruvate: step 3/4. Its function is as follows. Functions in the biosynthesis of branched-chain amino acids. Catalyzes the dehydration of (2R,3R)-2,3-dihydroxy-3-methylpentanoate (2,3-dihydroxy-3-methylvalerate) into 2-oxo-3-methylpentanoate (2-oxo-3-methylvalerate) and of (2R)-2,3-dihydroxy-3-methylbutanoate (2,3-dihydroxyisovalerate) into 2-oxo-3-methylbutanoate (2-oxoisovalerate), the penultimate precursor to L-isoleucine and L-valine, respectively. In Saccharophagus degradans (strain 2-40 / ATCC 43961 / DSM 17024), this protein is Dihydroxy-acid dehydratase.